The following is a 469-amino-acid chain: Arginine biosynthesis bifunctional protein ArgJ, mitochondrial (469 aa).

Substrate-binding residues include threonine 199, lysine 228, threonine 239, glutamate 325, asparagine 464, and threonine 469. Residue threonine 239 is the Nucleophile of the active site.

This sequence belongs to the ArgJ family. Heterodimer of an alpha and a beta chain. In terms of processing, the alpha and beta chains are autoproteolytically processed from a single precursor protein within the mitochondrion.

The protein resides in the mitochondrion matrix. The catalysed reaction is N(2)-acetyl-L-ornithine + L-glutamate = N-acetyl-L-glutamate + L-ornithine. It carries out the reaction L-glutamate + acetyl-CoA = N-acetyl-L-glutamate + CoA + H(+). The protein operates within amino-acid biosynthesis; L-arginine biosynthesis; L-ornithine and N-acetyl-L-glutamate from L-glutamate and N(2)-acetyl-L-ornithine (cyclic): step 1/1. It functions in the pathway amino-acid biosynthesis; L-arginine biosynthesis; N(2)-acetyl-L-ornithine from L-glutamate: step 1/4. Functionally, catalyzes two activities which are involved in the cyclic version of arginine biosynthesis: the synthesis of acetylglutamate from glutamate and acetyl-CoA, and of ornithine by transacetylation between acetylornithine and glutamate. The polypeptide is Arginine biosynthesis bifunctional protein ArgJ, mitochondrial (Neurospora crassa (strain ATCC 24698 / 74-OR23-1A / CBS 708.71 / DSM 1257 / FGSC 987)).